The following is a 282-amino-acid chain: Acyl-CoA-binding domain-containing protein 6 (282 aa).

The disordered stretch occupies residues 1–34 (MATPFLPAGATTGDSGGELSSGDDSGDLESFQTP). At Ser-41 the chain carries Phosphoserine. Residues 42–127 (LAELFEKAAA…VKKLDPGWNP (86 aa)) form the ACB domain. An acyl-CoA contacts are provided by residues 69–73 (YARYK) and Lys-95. A Phosphoserine modification is found at Ser-106. Tyr-114 provides a ligand contact to an acyl-CoA. ANK repeat units lie at residues 191–220 (EGRA…GINC) and 224–253 (EGQT…DPTL).

Monomer.

Its subcellular location is the cytoplasm. It localises to the nucleus. Functionally, binds long-chain acyl-coenzyme A molecules with a strong preference for unsaturated C18:1-CoA, lower affinity for unsaturated C20:4-CoA, and very weak affinity for saturated C16:0-CoA. Does not bind fatty acids. Plays a role in protein N-myristoylation. The protein is Acyl-CoA-binding domain-containing protein 6 (Acbd6) of Rattus norvegicus (Rat).